Here is a 490-residue protein sequence, read N- to C-terminus: Probable cytosol aminopeptidase (490 aa).

Mn(2+) is bound by residues K256 and D261. K268 is a catalytic residue. Mn(2+) contacts are provided by D280, D340, and E342. R344 is an active-site residue.

This sequence belongs to the peptidase M17 family. It depends on Mn(2+) as a cofactor.

It localises to the cytoplasm. The catalysed reaction is Release of an N-terminal amino acid, Xaa-|-Yaa-, in which Xaa is preferably Leu, but may be other amino acids including Pro although not Arg or Lys, and Yaa may be Pro. Amino acid amides and methyl esters are also readily hydrolyzed, but rates on arylamides are exceedingly low.. The enzyme catalyses Release of an N-terminal amino acid, preferentially leucine, but not glutamic or aspartic acids.. Functionally, presumably involved in the processing and regular turnover of intracellular proteins. Catalyzes the removal of unsubstituted N-terminal amino acids from various peptides. The sequence is that of Probable cytosol aminopeptidase from Synechococcus sp. (strain CC9902).